A 239-amino-acid polypeptide reads, in one-letter code: MADS-box transcription factor 34 (239 aa).

Residues 1–61 enclose the MADS-box domain; the sequence is MGRGKVVLQR…GRLYQFSSSS (61 aa). One can recognise a K-box domain in the interval 88–178; the sequence is MQNNYQEYVN…KRKLDEIDVE (91 aa). Positions 179–208 are disordered; sequence AAPPQPPWNGNCSNGHGGGGGVFSSEPPQP.

Highly expressed in leaves and at low levels in roots and spikelets (rice flower).

It is found in the nucleus. In terms of biological role, probable transcription factor. The polypeptide is MADS-box transcription factor 34 (MADS34) (Oryza sativa subsp. japonica (Rice)).